A 153-amino-acid chain; its full sequence is Subtilisin propeptide-like protein (153 aa).

Positions 1–27 (MKFLFAFNFFSLYIYLYEFLCIHLCGS) are cleaved as a signal peptide. Positions 127–153 (QISHLSEFIQYLLNKNVCIEFNQNVML) are dispensable for parasite growth in host erythrocytes.

It localises to the secreted. The protein resides in the parasitophorous vacuole lumen. Its subcellular location is the cell membrane. Its function is as follows. Acts as a specific inhibitor of subtilisin-like protease SUB1. The protein is Subtilisin propeptide-like protein of Plasmodium falciparum (isolate 3D7).